A 254-amino-acid polypeptide reads, in one-letter code: Phosphate import ATP-binding protein PstB (254 aa).

One can recognise an ABC transporter domain in the interval 9–249 (MSVKDLDLFY…PVDKRTEDYI (241 aa)). Residue 41–48 (GPSGCGKS) coordinates ATP.

The protein belongs to the ABC transporter superfamily. Phosphate importer (TC 3.A.1.7) family. The complex is composed of two ATP-binding proteins (PstB), two transmembrane proteins (PstC and PstA) and a solute-binding protein (PstS).

It localises to the cell membrane. It catalyses the reaction phosphate(out) + ATP + H2O = ADP + 2 phosphate(in) + H(+). In terms of biological role, part of the ABC transporter complex PstSACB involved in phosphate import. Responsible for energy coupling to the transport system. In Clostridioides difficile (strain 630) (Peptoclostridium difficile), this protein is Phosphate import ATP-binding protein PstB.